Reading from the N-terminus, the 373-residue chain is 3-isopropylmalate dehydrogenase (373 aa).

82–93 (GPKWGTGALRPE) contributes to the NAD(+) binding site. R100, R110, R139, and D231 together coordinate substrate. Mg(2+) contacts are provided by D231, D256, and D260. 295-306 (GSAPDLPANKVN) provides a ligand contact to NAD(+).

The protein belongs to the isocitrate and isopropylmalate dehydrogenases family. As to quaternary structure, homodimer. Mg(2+) is required as a cofactor. It depends on Mn(2+) as a cofactor.

The protein localises to the cytoplasm. The enzyme catalyses (2R,3S)-3-isopropylmalate + NAD(+) = 4-methyl-2-oxopentanoate + CO2 + NADH. The protein operates within amino-acid biosynthesis; L-leucine biosynthesis; L-leucine from 3-methyl-2-oxobutanoate: step 3/4. Catalyzes the oxidation of 3-carboxy-2-hydroxy-4-methylpentanoate (3-isopropylmalate) to 3-carboxy-4-methyl-2-oxopentanoate. The product decarboxylates to 4-methyl-2 oxopentanoate. In Candida maltosa (Yeast), this protein is 3-isopropylmalate dehydrogenase (LEU2).